A 416-amino-acid polypeptide reads, in one-letter code: Xyloglucan O-acetyltransferase 1 (416 aa).

Topologically, residues methionine 1 to lysine 14 are cytoplasmic. A helical; Signal-anchor for type II membrane protein transmembrane segment spans residues isoleucine 15–asparagine 35. At proline 36 to valine 416 the chain is on the lumenal side. Intrachain disulfides connect cysteine 79-cysteine 129, cysteine 100-cysteine 165, cysteine 109-cysteine 395, and cysteine 318-cysteine 391. Asparagine 96 carries N-linked (GlcNAc...) asparagine glycosylation. The short motif at glycine 152–serine 154 is the GDS motif element. The active-site Nucleophile is serine 154. 3 N-linked (GlcNAc...) asparagine glycosylation sites follow: asparagine 194, asparagine 269, and asparagine 319. Aspartate 390 (proton donor) is an active-site residue. Positions aspartate 390–histidine 393 match the DXXH motif motif. The Proton acceptor role is filled by histidine 393.

The protein belongs to the PC-esterase family. TBL subfamily.

Its subcellular location is the golgi apparatus membrane. Xyloglucan acetyltransferase that catalyzes the acetylation of fucosylated Gal residues on xyloglucan side chains. Predominantly catalyze 6-O-monoacetylation of Gal residues in the Fuc-Gal-Xyl trisaccharide side chains of xyloglucan oligomers. Involved in xyloglucan specific O-acetylation in roots and rosette leaves. In Arabidopsis thaliana (Mouse-ear cress), this protein is Xyloglucan O-acetyltransferase 1.